An 82-amino-acid polypeptide reads, in one-letter code: ATP synthase subunit c, chloroplastic (82 aa).

Methionine 1 is modified (N-formylmethionine). A run of 2 helical transmembrane segments spans residues 3-23 and 57-77; these read PIVAATSVVSAGLAVGLAAIG and FAFMESLTIYGLVVALALLFA.

It belongs to the ATPase C chain family. F-type ATPases have 2 components, F(1) - the catalytic core - and F(0) - the membrane proton channel. F(1) has five subunits: alpha(3), beta(3), gamma(1), delta(1), epsilon(1). F(0) has four main subunits: a(1), b(1), b'(1) and c(10-14). The alpha and beta chains form an alternating ring which encloses part of the gamma chain. F(1) is attached to F(0) by a central stalk formed by the gamma and epsilon chains, while a peripheral stalk is formed by the delta, b and b' chains.

Its subcellular location is the plastid. The protein localises to the chloroplast thylakoid membrane. F(1)F(0) ATP synthase produces ATP from ADP in the presence of a proton or sodium gradient. F-type ATPases consist of two structural domains, F(1) containing the extramembraneous catalytic core and F(0) containing the membrane proton channel, linked together by a central stalk and a peripheral stalk. During catalysis, ATP synthesis in the catalytic domain of F(1) is coupled via a rotary mechanism of the central stalk subunits to proton translocation. Its function is as follows. Key component of the F(0) channel; it plays a direct role in translocation across the membrane. A homomeric c-ring of between 10-14 subunits forms the central stalk rotor element with the F(1) delta and epsilon subunits. This Chlamydomonas reinhardtii (Chlamydomonas smithii) protein is ATP synthase subunit c, chloroplastic.